The chain runs to 271 residues: Neurexophilin-1 (271 aa).

A signal peptide spans 1 to 21 (MQAACWYVLFLLQPTVYLVTC). Positions 22 to 97 (ANLTNGGKSE…WDWLRNSTDL (76 aa)) are II. Asparagine 23, asparagine 68, asparagine 93, asparagine 146, asparagine 156, and asparagine 162 each carry an N-linked (GlcNAc...) asparagine glycan. The segment at 98-176 (QEPRPRAKRR…LVPPTKIVEF (79 aa)) is III. Residues 177 to 185 (DLAQQTVID) are IV (linker domain). Positions 186–271 (AKDSKSFNCR…HSDTPYFPSG (86 aa)) are v (Cys-rich).

This sequence belongs to the neurexophilin family.

It is found in the secreted. Functionally, may be signaling molecules that resemble neuropeptides and that act by binding to alpha-neurexins and possibly other receptors. This Homo sapiens (Human) protein is Neurexophilin-1 (NXPH1).